A 236-amino-acid polypeptide reads, in one-letter code: Outer membrane protein P.III (236 aa).

A signal peptide spans 1–22 (MTKQLKLSALFVALLASGTAVA). A run of 4 repeats spans residues 69–70 (VP), 71–72 (EP), 73–74 (EP), and 75–76 (AP). The interval 69-76 (VPEPEPAP) is 4 X 2 AA tandem repeats of X-P. The region spanning 86–223 (YVDETISLSA…RVDVKIRSIV (138 aa)) is the OmpA-like domain. A disulfide bridge connects residues Cys185 and Cys208.

This sequence belongs to the outer membrane OOP (TC 1.B.6) superfamily.

Its subcellular location is the cell outer membrane. The sequence is that of Outer membrane protein P.III from Neisseria gonorrhoeae.